The chain runs to 243 residues: 1-(5-phosphoribosyl)-5-[(5-phosphoribosylamino)methylideneamino] imidazole-4-carboxamide isomerase (243 aa).

D8 functions as the Proton acceptor in the catalytic mechanism. Residue D130 is the Proton donor of the active site.

The protein belongs to the HisA/HisF family.

It is found in the cytoplasm. It carries out the reaction 1-(5-phospho-beta-D-ribosyl)-5-[(5-phospho-beta-D-ribosylamino)methylideneamino]imidazole-4-carboxamide = 5-[(5-phospho-1-deoxy-D-ribulos-1-ylimino)methylamino]-1-(5-phospho-beta-D-ribosyl)imidazole-4-carboxamide. It participates in amino-acid biosynthesis; L-histidine biosynthesis; L-histidine from 5-phospho-alpha-D-ribose 1-diphosphate: step 4/9. In Vesicomyosocius okutanii subsp. Calyptogena okutanii (strain HA), this protein is 1-(5-phosphoribosyl)-5-[(5-phosphoribosylamino)methylideneamino] imidazole-4-carboxamide isomerase.